The chain runs to 715 residues: MTAKTKPAPDIATLTKPKAKVELMRLRLEIEGHDKAYYQDDAPKISDADYDALRRRLEAIEQKFPELVNASSPTQTVGAAPARGFAKVQHAVPMLSLGNAFADDEVAEFALRVQRFLKLDDVPAIVAEPKIDGLSLSLRYENGELVRAATRGDGFTGEDVTANVRTIKDVPNTLKGKHIPATCELRGEVYMLKQDFLALNKRQEEANETVFANPRNSAAGSLRQKDVTVTASRPLKFFAYAWGEMSDYPMEEPTQHKMLQWLDHAGFVVNPEITLCHSVEDALAFYRRIGEKRASLPYDIDGVVYKVDRLDYQERLGFVSRSPRWAIAHKFAAEQATTVLEKIDIQVGRTGAMTPVARLQPVTVGGVVVQNATLHNEDYIKGIGNDGEPIRDGVDIREGDTVVVQRAGDVIPQIVSVVMEKRPAGAEPYHFPHKCPVCGSHAVREEGEAVWRCTGALICPAQAVERLKHFVSRLAFDIDGLGEKQIELFHERGWVQEPADIFTLKARNAELKLEQLEGYGETSVRNLFAAIDARRSIELHRLVFALGIRHVGEGNAKLLARHYGTLDAFLSAMRAAADAQTEEGNTSEAYQDLDNIAGIGDVVAEAVVEFFAEERNIKALDALLAELTEVLPAEQARRDTAVAGKTVVFTGSLSKFTRDEAKAAAERLGAKVAGSVSKKTDYVVAGEDAGSKLTKAKDLGVTVLTEDEWLALIGN.

NAD(+)-binding positions include 47-51 (DADYD), 96-97 (SL), and E128. Catalysis depends on K130, which acts as the N6-AMP-lysine intermediate. NAD(+) is bound by residues R151, E188, K306, and K330. Zn(2+) contacts are provided by C435, C438, C453, and C459. The BRCT domain occupies 637–715 (RRDTAVAGKT…EDEWLALIGN (79 aa)).

The protein belongs to the NAD-dependent DNA ligase family. LigA subfamily. Mg(2+) serves as cofactor. The cofactor is Mn(2+).

The enzyme catalyses NAD(+) + (deoxyribonucleotide)n-3'-hydroxyl + 5'-phospho-(deoxyribonucleotide)m = (deoxyribonucleotide)n+m + AMP + beta-nicotinamide D-nucleotide.. Its function is as follows. DNA ligase that catalyzes the formation of phosphodiester linkages between 5'-phosphoryl and 3'-hydroxyl groups in double-stranded DNA using NAD as a coenzyme and as the energy source for the reaction. It is essential for DNA replication and repair of damaged DNA. In Rhodopseudomonas palustris (strain ATCC BAA-98 / CGA009), this protein is DNA ligase.